A 262-amino-acid chain; its full sequence is Phosphatidylserine decarboxylase proenzyme (262 aa).

Residues Asp86, His142, and Ser226 each act as charge relay system; for autoendoproteolytic cleavage activity in the active site. Ser226 (schiff-base intermediate with substrate; via pyruvic acid; for decarboxylase activity) is an active-site residue. Ser226 bears the Pyruvic acid (Ser); by autocatalysis mark.

This sequence belongs to the phosphatidylserine decarboxylase family. PSD-B subfamily. Prokaryotic type I sub-subfamily. Heterodimer of a large membrane-associated beta subunit and a small pyruvoyl-containing alpha subunit. Pyruvate is required as a cofactor. Post-translationally, is synthesized initially as an inactive proenzyme. Formation of the active enzyme involves a self-maturation process in which the active site pyruvoyl group is generated from an internal serine residue via an autocatalytic post-translational modification. Two non-identical subunits are generated from the proenzyme in this reaction, and the pyruvate is formed at the N-terminus of the alpha chain, which is derived from the carboxyl end of the proenzyme. The autoendoproteolytic cleavage occurs by a canonical serine protease mechanism, in which the side chain hydroxyl group of the serine supplies its oxygen atom to form the C-terminus of the beta chain, while the remainder of the serine residue undergoes an oxidative deamination to produce ammonia and the pyruvoyl prosthetic group on the alpha chain. During this reaction, the Ser that is part of the protease active site of the proenzyme becomes the pyruvoyl prosthetic group, which constitutes an essential element of the active site of the mature decarboxylase.

The protein localises to the cell membrane. The enzyme catalyses a 1,2-diacyl-sn-glycero-3-phospho-L-serine + H(+) = a 1,2-diacyl-sn-glycero-3-phosphoethanolamine + CO2. It functions in the pathway phospholipid metabolism; phosphatidylethanolamine biosynthesis; phosphatidylethanolamine from CDP-diacylglycerol: step 2/2. Catalyzes the formation of phosphatidylethanolamine (PtdEtn) from phosphatidylserine (PtdSer). This Bacillus anthracis protein is Phosphatidylserine decarboxylase proenzyme.